A 944-amino-acid chain; its full sequence is Translation initiation factor IF-2 (944 aa).

Disordered stretches follow at residues 50 to 91 (SAKT…FAGK) and 114 to 349 (KVEV…VPAT). Basic and acidic residues-rich tracts occupy residues 75–86 (ESAKKNKEDHPR), 124–157 (VVTE…ETKD), 164–185 (AEVK…EKKK), and 199–233 (KRAE…DNRR). The span at 267 to 280 (SSGSAPATDSFTPA) shows a compositional bias: polar residues. Over residues 286 to 307 (SRRDRDRKKSDNNRDNTKDGNR) the composition is skewed to basic and acidic residues. 2 stretches are compositionally biased toward polar residues: residues 317–331 (NRNQ…NWNQ) and 338–348 (YQNNQSSSVPA). In terms of domain architecture, tr-type G spans 443 to 614 (ERPAVVTIMG…LLVAEVQELK (172 aa)). The interval 452–459 (GHVDHGKT) is G1. Residue 452-459 (GHVDHGKT) participates in GTP binding. The G2 stretch occupies residues 477-481 (GITQH). Positions 498–501 (DTPG) are G3. Residues 498 to 502 (DTPGH) and 552 to 555 (NKID) contribute to the GTP site. Positions 552–555 (NKID) are G4. The segment at 590–592 (SAK) is G5.

The protein belongs to the TRAFAC class translation factor GTPase superfamily. Classic translation factor GTPase family. IF-2 subfamily.

It localises to the cytoplasm. Its function is as follows. One of the essential components for the initiation of protein synthesis. Protects formylmethionyl-tRNA from spontaneous hydrolysis and promotes its binding to the 30S ribosomal subunits. Also involved in the hydrolysis of GTP during the formation of the 70S ribosomal complex. The protein is Translation initiation factor IF-2 (infB) of Lactococcus lactis subsp. lactis (strain IL1403) (Streptococcus lactis).